Consider the following 484-residue polypeptide: tRNA sulfurtransferase (484 aa).

A THUMP domain is found at 63–167; it reads REMIERLTCT…LDRLFVIHRQ (105 aa). Residues 185–186, Lys267, Gly289, and Gln298 contribute to the ATP site; that span reads LM. Cys346 and Cys457 are joined by a disulfide. Residues 405–483 form the Rhodanese domain; that stretch reads VLPGQIVIDI…GHTNVRVYRP (79 aa). Cys457 functions as the Cysteine persulfide intermediate in the catalytic mechanism.

This sequence belongs to the ThiI family.

It localises to the cytoplasm. It catalyses the reaction [ThiI sulfur-carrier protein]-S-sulfanyl-L-cysteine + a uridine in tRNA + 2 reduced [2Fe-2S]-[ferredoxin] + ATP + H(+) = [ThiI sulfur-carrier protein]-L-cysteine + a 4-thiouridine in tRNA + 2 oxidized [2Fe-2S]-[ferredoxin] + AMP + diphosphate. The catalysed reaction is [ThiS sulfur-carrier protein]-C-terminal Gly-Gly-AMP + S-sulfanyl-L-cysteinyl-[cysteine desulfurase] + AH2 = [ThiS sulfur-carrier protein]-C-terminal-Gly-aminoethanethioate + L-cysteinyl-[cysteine desulfurase] + A + AMP + 2 H(+). The protein operates within cofactor biosynthesis; thiamine diphosphate biosynthesis. Its function is as follows. Catalyzes the ATP-dependent transfer of a sulfur to tRNA to produce 4-thiouridine in position 8 of tRNAs, which functions as a near-UV photosensor. Also catalyzes the transfer of sulfur to the sulfur carrier protein ThiS, forming ThiS-thiocarboxylate. This is a step in the synthesis of thiazole, in the thiamine biosynthesis pathway. The sulfur is donated as persulfide by IscS. The chain is tRNA sulfurtransferase from Pseudomonas aeruginosa (strain LESB58).